We begin with the raw amino-acid sequence, 74 residues long: Exodeoxyribonuclease 7 small subunit (74 aa).

Belongs to the XseB family. Heterooligomer composed of large and small subunits.

The protein resides in the cytoplasm. It carries out the reaction Exonucleolytic cleavage in either 5'- to 3'- or 3'- to 5'-direction to yield nucleoside 5'-phosphates.. Its function is as follows. Bidirectionally degrades single-stranded DNA into large acid-insoluble oligonucleotides, which are then degraded further into small acid-soluble oligonucleotides. The protein is Exodeoxyribonuclease 7 small subunit of Synechococcus elongatus (strain ATCC 33912 / PCC 7942 / FACHB-805) (Anacystis nidulans R2).